A 507-amino-acid polypeptide reads, in one-letter code: Proton-coupled zinc antiporter SLC30A1 (507 aa).

Residues 1–10 lie on the Cytoplasmic side of the membrane; that stretch reads MGCWGRNRGR. A helical membrane pass occupies residues 11–31; sequence LLCMLALTFMFMVLEVVVSRV. Over 32-35 the chain is Extracellular; it reads TSSL. The chain crosses the membrane as a helical span at residues 36–56; it reads AMLSDSFHMLSDVLALVVALV. 2 residues coordinate Zn(2+): His-43 and Asp-47. The Cytoplasmic portion of the chain corresponds to 57–78; sequence AERFARRTHATQKNTFGWIRAE. The chain crosses the membrane as a helical span at residues 79–99; sequence VMGALVNAIFLTGLCFAILLE. Residues 100–113 lie on the Extracellular side of the membrane; sequence AIERFIEPHEMQQP. Residues 114-134 traverse the membrane as a helical segment; the sequence is LVVLGVGVAGLLVNVLGLCLF. At 135-248 the chain is on the cytoplasmic side; the sequence is HHHSGFSQDS…RAGQLNMRGV (114 aa). The tract at residues 142–217 is disordered; the sequence is QDSGHGHSHG…DPENPRSGDT (76 aa). A 6 X 2 AA approximate repeats of H-G region spans residues 146 to 158; that stretch reads HGHSHGGHGHGHG. Positions 147–167 are enriched in basic residues; that stretch reads GHSHGGHGHGHGLPKGPRVKS. Positions 189 to 201 are enriched in polar residues; it reads TNTLVANTSNSNG. The chain crosses the membrane as a helical span at residues 249 to 269; that stretch reads FLHVLGDALGSVIVVVNALVF. Zn(2+) contacts are provided by His-251 and Asp-255. Residues 270 to 308 are Extracellular-facing; that stretch reads YFSWKGCSEGDFCVNPCFPDPCKAFVEIINSTHASVYEA. Residue Asn-299 is glycosylated (N-linked (GlcNAc...) asparagine). Residues 309 to 329 form a helical membrane-spanning segment; that stretch reads GPCWVLYLDPTLCVVMVCILL. Topologically, residues 330–507 are cytoplasmic; it reads YTTYPLLKES…MPNKQPESSL (178 aa). At Ser-506 the chain carries Phosphoserine.

The protein belongs to the cation diffusion facilitator (CDF) transporter (TC 2.A.4) family. SLC30A subfamily. Homodimer. Interacts with TMEM163. Interacts and forms a complex with TMC6 and TMC8; the interaction regulates zinc transport into the ER. In terms of assembly, (Microbial infection) Interacts with human papillomavirus 16/HPV16 protein E5; the interaction alleviates SLC30A1-mediated transcription factors inhibition. N-glycosylated at Asn-299. N-glycosylation promotes endocytosis and degradation through the proteasomal or lysosomal pathways.

The protein localises to the cell membrane. Its subcellular location is the basolateral cell membrane. The protein resides in the cytoplasmic vesicle membrane. It localises to the cytoplasm. It is found in the endoplasmic reticulum membrane. The protein localises to the golgi apparatus membrane. Its subcellular location is the nucleus membrane. The catalysed reaction is Zn(2+)(in) + 2 H(+)(out) = Zn(2+)(out) + 2 H(+)(in). Zinc ion:proton antiporter that could function at the plasma membrane mediating zinc efflux from cells against its electrochemical gradient protecting them from intracellular zinc accumulation and toxicity. Alternatively, could prevent the transport to the plasma membrane of CACNB2, the L-type calcium channels regulatory subunit, through a yet to be defined mechanism. By modulating the expression of these channels at the plasma membrane, could prevent calcium and zinc influx into cells. By the same mechanism, could also prevent L-type calcium channels-mediated heavy metal influx into cells. In some cells, could also function as a zinc ion:proton antiporter mediating zinc entry into the lumen of cytoplasmic vesicles. In macrophages, can increase zinc ions concentration into the lumen of cytoplasmic vesicles containing engulfed bacteria and could help inactivate them. Forms a complex with TMC6/EVER1 and TMC8/EVER2 at the ER membrane of keratynocytes which facilitates zinc uptake into the ER. Down-regulates the activity of transcription factors induced by zinc and cytokines. In Homo sapiens (Human), this protein is Proton-coupled zinc antiporter SLC30A1.